Reading from the N-terminus, the 500-residue chain is FAD-linked oxidoreductase srdI (500 aa).

The N-terminal stretch at 1–20 (MHLSSSLLFTSALLAGGINA) is a signal peptide. Asparagine 47 carries N-linked (GlcNAc...) asparagine glycosylation. The FAD-binding PCMH-type domain maps to 69–241 (YRPPSYQAAI…TQATYKMHKS (173 aa)). N-linked (GlcNAc...) asparagine glycosylation is found at asparagine 257 and asparagine 282.

Belongs to the oxygen-dependent FAD-linked oxidoreductase family. Requires FAD as cofactor.

FAD-linked oxidoreductase; part of the gene cluster that mediates the biosynthesis of sordarial, a salicylic aldehyde structurally related to the phytotoxin pyriculol. The most interesting aspect of this pathway is formation of an aromatic product from the highly reducing polyketide synthase srdA. SrdA synthesizes a reduced polyketide chain from one molecule of acetyl-CoA and five molecules of malonyl-CoA. The polyketide chain is then reductively released as an aldehyde. The oxidoreductases srdC, srdD and srdE then oxidize one of the hydroxy groups to facilitate the intramolecular aldol condensation, followed by dehydration to yield a salicylic aldehyde. This aldehyde can undergo facile reduction by endogenous reductases to yield the alcohol 1-hydroxy-2-hydroxymethyl-3-pent-1,3-dienylbenzene. The flavin-dependent srdI counteract against the propensity of the aldehydes to be reduced under physiological conditions and is responsible for reoxidizing 1-hydroxy-2-hydroxymethyl-3-pent-1,3-dienylbenzene back to the salicylic aldehyde. This salicylic aldehyde is then selectively epoxidized by the cupin-domain-containing oxidoreductase srdB to yield the epoxide, which can be hydrolyzed stereoselectively by the hydrolase srdG to give the final product sordarial. This chain is FAD-linked oxidoreductase srdI, found in Neurospora crassa (strain ATCC 24698 / 74-OR23-1A / CBS 708.71 / DSM 1257 / FGSC 987).